We begin with the raw amino-acid sequence, 81 residues long: ATP synthase subunit c (81 aa).

A run of 2 helical transmembrane segments spans residues 7 to 27 and 55 to 75; these read LVAIASAILIAFGALGTAIGF and IAGLLDAVPMIGVGIGLFFIF.

This sequence belongs to the ATPase C chain family. As to quaternary structure, F-type ATPases have 2 components, F(1) - the catalytic core - and F(0) - the membrane proton channel. F(1) has five subunits: alpha(3), beta(3), gamma(1), delta(1), epsilon(1). F(0) has three main subunits: a(1), b(2) and c(10-14). The alpha and beta chains form an alternating ring which encloses part of the gamma chain. F(1) is attached to F(0) by a central stalk formed by the gamma and epsilon chains, while a peripheral stalk is formed by the delta and b chains.

Its subcellular location is the cell inner membrane. In terms of biological role, f(1)F(0) ATP synthase produces ATP from ADP in the presence of a proton or sodium gradient. F-type ATPases consist of two structural domains, F(1) containing the extramembraneous catalytic core and F(0) containing the membrane proton channel, linked together by a central stalk and a peripheral stalk. During catalysis, ATP synthesis in the catalytic domain of F(1) is coupled via a rotary mechanism of the central stalk subunits to proton translocation. Its function is as follows. Key component of the F(0) channel; it plays a direct role in translocation across the membrane. A homomeric c-ring of between 10-14 subunits forms the central stalk rotor element with the F(1) delta and epsilon subunits. The protein is ATP synthase subunit c of Acinetobacter baumannii (strain ACICU).